Here is a 440-residue protein sequence, read N- to C-terminus: Ferredoxin--NADP reductase (440 aa).

Residues S17–V75 enclose the CpcD-like domain. Residues K99 to A142 form a disordered region. Residues P122–K133 show a composition bias toward basic and acidic residues. Positions N155–L279 constitute an FAD-binding FR-type domain. FAD contacts are provided by residues R214–S217, C235–R237, Y241, V253–S255, and T294. NADP(+) is bound by residues S217 and R237. NADP(+) contacts are provided by residues T294, V330–P331, S360–R361, R370–Q374, G399–L400, and E438.

This sequence belongs to the ferredoxin--NADP reductase type 1 family. The cofactor is FAD.

Its subcellular location is the cellular thylakoid membrane. The catalysed reaction is 2 reduced [2Fe-2S]-[ferredoxin] + NADP(+) + H(+) = 2 oxidized [2Fe-2S]-[ferredoxin] + NADPH. The polypeptide is Ferredoxin--NADP reductase (petH) (Nostoc sp. (strain ATCC 29151 / PCC 7119) (Anabaena sp.)).